The following is a 404-amino-acid chain: MNKQIQTEADELGFFGEYGGQYVPETLMPAIIELKKAYKEAKADPEFQRELEYYLSEYVGRATPLTYAASYTESLGGAKIYLKREDLNHTGAHKINNALGQALLAKRMGKKKLVAETGAGQHGVASATVAALFDMELVVFMGSEDIKRQQLNVFRMELLGAKVVAVEDGQGTLSDAVNKALQYWVSHVDDTHYLLGSALGPDPFPTIVRDFQSVIGKEIKSQILKKEGRLPDAIVACIGGGSNAIGTFYPFIKDDVALYGVEAAGQGEDTDKHALAIGKGSPGVLHGTKMYLIQDEGGQVQLAHSISAGLDYPGIGPEHSYYHDIGRVTFENASDTQAMNALINFTKHEGIIPAIESAHALSYVERLAPTMSKEDIIVVTISGRGDKDMETIRQYMAERGLAND.

N6-(pyridoxal phosphate)lysine is present on Lys-94.

The protein belongs to the TrpB family. As to quaternary structure, tetramer of two alpha and two beta chains. It depends on pyridoxal 5'-phosphate as a cofactor.

It catalyses the reaction (1S,2R)-1-C-(indol-3-yl)glycerol 3-phosphate + L-serine = D-glyceraldehyde 3-phosphate + L-tryptophan + H2O. It functions in the pathway amino-acid biosynthesis; L-tryptophan biosynthesis; L-tryptophan from chorismate: step 5/5. Functionally, the beta subunit is responsible for the synthesis of L-tryptophan from indole and L-serine. This Staphylococcus aureus (strain MRSA252) protein is Tryptophan synthase beta chain.